Consider the following 68-residue polypeptide: uncharacterized protein (68 aa).

Residues 1 to 27 (MNEFEKWIEGRYEPHEQKQKEHEDTMG) are disordered.

This is an uncharacterized protein from Bacillus subtilis (strain 168).